Reading from the N-terminus, the 460-residue chain is L-seryl-tRNA(Sec) selenium transferase (460 aa).

Lys-293 is modified (N6-(pyridoxal phosphate)lysine).

This sequence belongs to the SelA family. It depends on pyridoxal 5'-phosphate as a cofactor.

The protein localises to the cytoplasm. The catalysed reaction is L-seryl-tRNA(Sec) + selenophosphate + H(+) = L-selenocysteinyl-tRNA(Sec) + phosphate. The protein operates within aminoacyl-tRNA biosynthesis; selenocysteinyl-tRNA(Sec) biosynthesis; selenocysteinyl-tRNA(Sec) from L-seryl-tRNA(Sec) (bacterial route): step 1/1. In terms of biological role, converts seryl-tRNA(Sec) to selenocysteinyl-tRNA(Sec) required for selenoprotein biosynthesis. This Pasteurella multocida (strain Pm70) protein is L-seryl-tRNA(Sec) selenium transferase.